Reading from the N-terminus, the 904-residue chain is Polycystin-2 (904 aa).

Residues 1–102 (MSSSRVRPQA…SSSGGVPGNF (102 aa)) are disordered. The Cytoplasmic segment spans residues 1-155 (MSSSRVRPQA…NSNREMYLKT (155 aa)). The segment covering 8-20 (PQAPQSPAASASA) has biased composition (low complexity). A compositionally biased stretch (basic and acidic residues) spans 26-38 (EGIEMEKMHHEEV). Over residues 86–96 (SVSTTSSSSSG) the composition is skewed to low complexity. The helical transmembrane segment at 156–177 (VLREMITYILFLLTLCIITYGM) threads the bilayer. Over 178 to 404 (VSTNMYYYTK…TVRLLRYVSS (227 aa)) the chain is Extracellular. N-linked (GlcNAc...) asparagine glycosylation is found at asparagine 235, asparagine 241, and asparagine 264. A disulfide bridge links cysteine 267 with cysteine 280. Asparagine 298 carries N-linked (GlcNAc...) asparagine glycosylation. A helical transmembrane segment spans residues 405–425 (WDYFVGMCEVSFCLFVLYYLV). The Cytoplasmic segment spans residues 426-441 (EEALEIRLHRLRYFKS). Residues 442-462 (LWNCLDVLIVALSVPAIIMNI) form a helical membrane-spanning segment. The Extracellular portion of the chain corresponds to 463-489 (CRTSAVSHRLHFLLENHSTYPNFEPLA). N-linked (GlcNAc...) asparagine glycosylation is present at asparagine 478. The helical transmembrane segment at 490 to 510 (RLQVHFNNLAAIIVFLSWVKL) threads the bilayer. Residues 511 to 534 (FKFINFNKTMNQLSTTMSRCAKDL) are Cytoplasmic-facing. Residues 535 to 556 (MGFAIMFFIVFLAYAQLAYLVF) traverse the membrane as a helical segment. Residues 557 to 568 (GTQVNDFSTFQA) are Extracellular-facing. The pore-forming intramembrane region spans 569-583 (CIFTQFRIILGDFDF). Leucine 578 contacts Ca(2+). Positions 578-580 (LGD) match the Selectivity filter motif. Over 584-591 (SEIEEADS) the chain is Extracellular. Residues 592–612 (VLGPIYFTTFVFFIFMILLNM) traverse the membrane as a helical segment. Residues 613-904 (FLAIINDTYS…DAAASGPAHL (292 aa)) are Cytoplasmic-facing. The 36-residue stretch at 687-722 (HSDAEIEAIFAKYDLDGDQELTEHEHQQMRDDLEKE) folds into the EF-hand 1 domain. Residues aspartate 700, aspartate 702, aspartate 704, glutamate 706, and glutamate 711 each contribute to the Ca(2+) site. Residues 708–732 (TEHEHQQMRDDLEKEREDLDLEHSS) are compositionally biased toward basic and acidic residues. Disordered regions lie at residues 708–770 (TEHE…SSGG) and 854–904 (ESDD…PAHL). The linker stretch occupies residues 740-759 (RSFSRSQDDSEEDDDEDSGH). In terms of domain architecture, EF-hand 2 spans 768–786 (SGGVSYEEFQVLVRRVDRM). Residues 770-809 (GVSYEEFQVLVRRVDRMEHSIGSIVSKIDAVIVKLEAMER) are a coiled coil. A compositionally biased stretch (low complexity) spans 878–890 (LRPRSSRPPSSLS).

The protein belongs to the polycystin family. Homotetramer. Component of the heterotetrameric polycystin channel complex with pkd1; the tetramer contains one pkd1 chain and three pkd2 chains. Interacts with pkd1l1. In terms of processing, phosphorylated. Phosphorylation is important for protein function; a mutant human construct that lacks the N-terminal phosphorylation sites cannot complement a zebrafish pkd2-deficient mutant. N-glycosylated. The four subunits in a tetramer probably differ in the extent of glycosylation; simultaneous glycosylation of all experimentally validated sites would probably create steric hindrance. Post-translationally, sumoylated by SUMO1; sumoylation regulates PKD2 membrane recycling. As to expression, detected along cilia and at the cilium basal body in Kupffer's vesicle at the 10 somite stage. Detected in heart at 48hpf. Detected in muscle and pronephric kidney at 48 hpf. Detected on trunk muscle sarcolemma and sarcomere, on ependymal cell cilia in brain, at the apical cell membrane in epithelial cells in the ear, at the lateral line organ and olfactory placode at 56 hpf. Detected in adult kidney (at protein level).

The protein localises to the basolateral cell membrane. It localises to the cell membrane. The protein resides in the sarcolemma. Its subcellular location is the cytoplasm. It is found in the myofibril. The protein localises to the sarcomere. It localises to the sarcoplasmic reticulum membrane. The protein resides in the apical cell membrane. Its subcellular location is the endoplasmic reticulum membrane. It is found in the cell projection. The protein localises to the cilium. It localises to the cytoskeleton. The protein resides in the cilium basal body. Its subcellular location is the cytoplasmic vesicle membrane. The catalysed reaction is K(+)(in) = K(+)(out). The enzyme catalyses Na(+)(in) = Na(+)(out). It carries out the reaction Ca(2+)(in) = Ca(2+)(out). With respect to regulation, channel activity is regulated by phosphorylation. Channel activity is regulated by intracellular Ca(2+). Forms a nonselective cation channel. Can function as a homotetrameric ion channel or can form heteromer with PKD1. Displays distinct function depending on its subcellular localization and regulation by its binding partners. In the primary cilium functions as a cation channel, with a preference for monovalent cations over divalent cations that allows K(+), Na(+) and Ca(2+) influx, with low selectivity for Ca(2+). In the endoplasmic reticulum, likely functions as a K(+) channel to facilitate Ca(2+) release. Required for normal oscillation of Ca(2+) levels within cilia; these oscillations of the intraciliary Ca(2+) levels can trigger cytoplasmic Ca(2+) signaling cascades. Required for normal temporal variation of the intracellular Ca(2+) levels in the heart. Plays a role in fluid-flow mechanosensation. Required for normal specification of the body left-right axis during embryogenesis, most likely via its role in ciliary Ca(2+) oscillations in Kupffer's vesicle. This Danio rerio (Zebrafish) protein is Polycystin-2.